The sequence spans 465 residues: Innexin-11 (465 aa).

Helical transmembrane passes span Leu29–Gly49, Gln105–Trp125, Ser195–Ala215, and Ile286–Val306. Positions Ile433–Ile465 are disordered.

Belongs to the pannexin family.

The protein resides in the cell membrane. Its subcellular location is the cell junction. The protein localises to the gap junction. In terms of biological role, structural component of the gap junctions. This is Innexin-11 (inx-11) from Caenorhabditis elegans.